The primary structure comprises 111 residues: Regulator of ribonuclease activity B (111 aa).

The protein belongs to the RraB family. In terms of assembly, interacts with the C-terminal region of Rne.

Its subcellular location is the cytoplasm. Globally modulates RNA abundance by binding to RNase E (Rne) and regulating its endonucleolytic activity. Can modulate Rne action in a substrate-dependent manner by altering the composition of the degradosome. This Pseudoalteromonas translucida (strain TAC 125) protein is Regulator of ribonuclease activity B.